The sequence spans 433 residues: DNA polymerase processivity factor (433 aa).

Residues 274 to 433 (RGDPFDKNYV…VPNTKKQKCG (160 aa)) are disordered. A compositionally biased stretch (low complexity) spans 298–307 (SLSSLANAGG). Composition is skewed to gly residues over residues 325-336 (GLGGLGGGGGGG) and 344-359 (GGGG…GGGG). Basic and acidic residues predominate over residues 360–376 (GDHDHGLSSKEKYEQHK). Over residues 385–398 (GGSGGGGGGGGGGL) the composition is skewed to gly residues.

The protein belongs to the herpesviridae polymerase accessory protein family. In terms of assembly, forms homodimers. Interacts with host SMARCB1. Interacts with host NCL/nucleolin; this interaction is important for the organization of proteins within viral replication compartments. Interacts with UL112/UL113; this interaction is necessary for efficient viral DNA replication. Interacts with UL84. Interacts with the uracil DNA glycosylase UL114. Interacts with the DNA polymerase catalytic subunit UL54. Interacts with host IRF3. Interacts with host RELA. Post-translationally, phosphorylated by UL97 on serine residues, phosphorylation seems important for UL44 nuclear entry but does not directly affect its role in replication. Sumoylated. Sumoylation on Lys-410 increases viral DNA replication.

Its subcellular location is the virion. The protein localises to the host nucleus. Accessory subunit of the DNA polymerase that plays an essential role in viral DNA replication and acts by increasing the processivity of polymerization. Forms dimers that binds to double-stranded DNA and UL54 specifically to stimulates long chain DNA synthesis efficiently. Plays an important role in maintaining the structure of viral replication compartments by interacting with host nucleolin/NUC. In addition, suppresses innate immune responses through effects on host IRF3 and NF-kappa-B. Mechanistically, interfere with the binding of IRF3 and the p65 NF-kappa-B subunit to the promoters of antiviral genes, thereby inhibiting the expression of these genes. In Human cytomegalovirus (strain Merlin) (HHV-5), this protein is DNA polymerase processivity factor (UL44).